We begin with the raw amino-acid sequence, 147 residues long: Large ribosomal subunit protein uL15 (147 aa).

The segment at 21–49 is disordered; the sequence is RVGRGEGSKGKTAGRGTKGTKARAPVRPG.

The protein belongs to the universal ribosomal protein uL15 family. As to quaternary structure, part of the 50S ribosomal subunit.

Its function is as follows. Binds to the 23S rRNA. The polypeptide is Large ribosomal subunit protein uL15 (Tropheryma whipplei (strain TW08/27) (Whipple's bacillus)).